The primary structure comprises 443 residues: Serine--tRNA ligase (443 aa).

250–252 (TSE) is an L-serine binding site. Position 281–283 (281–283 (RSE)) interacts with ATP. E304 is a binding site for L-serine. 368–371 (EISS) contacts ATP. S403 provides a ligand contact to L-serine.

Belongs to the class-II aminoacyl-tRNA synthetase family. Type-1 seryl-tRNA synthetase subfamily. Homodimer. The tRNA molecule binds across the dimer.

The protein localises to the cytoplasm. It carries out the reaction tRNA(Ser) + L-serine + ATP = L-seryl-tRNA(Ser) + AMP + diphosphate + H(+). The enzyme catalyses tRNA(Sec) + L-serine + ATP = L-seryl-tRNA(Sec) + AMP + diphosphate + H(+). It participates in aminoacyl-tRNA biosynthesis; selenocysteinyl-tRNA(Sec) biosynthesis; L-seryl-tRNA(Sec) from L-serine and tRNA(Sec): step 1/1. Its function is as follows. Catalyzes the attachment of serine to tRNA(Ser). Is also able to aminoacylate tRNA(Sec) with serine, to form the misacylated tRNA L-seryl-tRNA(Sec), which will be further converted into selenocysteinyl-tRNA(Sec). The polypeptide is Serine--tRNA ligase (Variovorax paradoxus (strain S110)).